The chain runs to 487 residues: Probable cytochrome P450 313a5 (487 aa).

Phosphotyrosine is present on Tyr223. Residue Cys433 participates in heme binding.

Belongs to the cytochrome P450 family. Heme serves as cofactor.

Its subcellular location is the endoplasmic reticulum membrane. The protein resides in the microsome membrane. May be involved in the metabolism of insect hormones and in the breakdown of synthetic insecticides. The sequence is that of Probable cytochrome P450 313a5 (Cyp313a5) from Drosophila melanogaster (Fruit fly).